Consider the following 118-residue polypeptide: UPF0342 protein BpOF4_11360 (118 aa).

The protein belongs to the UPF0342 family.

This is UPF0342 protein BpOF4_11360 from Alkalihalophilus pseudofirmus (strain ATCC BAA-2126 / JCM 17055 / OF4) (Bacillus pseudofirmus).